We begin with the raw amino-acid sequence, 230 residues long: Uracil-DNA glycosylase (230 aa).

The active-site Proton acceptor is the Asp-70.

Belongs to the uracil-DNA glycosylase (UDG) superfamily. UNG family.

It is found in the cytoplasm. It catalyses the reaction Hydrolyzes single-stranded DNA or mismatched double-stranded DNA and polynucleotides, releasing free uracil.. Excises uracil residues from the DNA which can arise as a result of misincorporation of dUMP residues by DNA polymerase or due to deamination of cytosine. This is Uracil-DNA glycosylase from Pseudomonas putida (strain W619).